Consider the following 700-residue polypeptide: non-specific serine/threonine protein kinase Cdc7 (700 aa).

The region spanning Phe127–Phe644 is the Protein kinase domain. ATP contacts are provided by residues Ile133–Val141 and Lys163. Asp250 (proton acceptor) is an active-site residue.

Belongs to the protein kinase superfamily. Ser/Thr protein kinase family. As to quaternary structure, component of the Dbf4-dependent kinase (DDK) complex consisting of Cdc7 and the Dbf4 ortholog chif. Interacts with chif (via the processed polypeptide Chiffon-A); the interaction is direct.

It carries out the reaction L-seryl-[protein] + ATP = O-phospho-L-seryl-[protein] + ADP + H(+). The enzyme catalyses L-threonyl-[protein] + ATP = O-phospho-L-threonyl-[protein] + ADP + H(+). With respect to regulation, activated by chif. Inhibited by the synthetic compound XL413. In terms of biological role, catalytic component of the Dbf4-dependent kinase (DDK) complex. Phosphorylates components of the pre-replication complex, including Mcm2 and, to a lesser extent, Mcm4. Phosphorylates histones, including H3 and H2B. Required for DNA replication and mitotic proliferation, including during the endoreplication and amplification stages of DNA replication in egg chamber follicle cells of the ovary. The chain is non-specific serine/threonine protein kinase Cdc7 from Drosophila melanogaster (Fruit fly).